The chain runs to 776 residues: Disintegrin and metalloproteinase domain-containing protein 7 (776 aa).

Positions methionine 1–glycine 23 are cleaved as a signal peptide. Positions valine 24–threonine 176 are excised as a propeptide. Topologically, residues glycine 26–valine 669 are extracellular. Residues asparagine 84, asparagine 167, and asparagine 174 are each glycosylated (N-linked (GlcNAc...) asparagine). The 196-residue stretch at lysine 199–proline 394 folds into the Peptidase M12B domain. Cystine bridges form between cysteine 310-cysteine 389, cysteine 350-cysteine 373, cysteine 352-cysteine 357, and cysteine 460-cysteine 480. Positions phenylalanine 402–asparagine 488 constitute a Disintegrin domain. Asparagine 584, asparagine 629, and asparagine 665 each carry an N-linked (GlcNAc...) asparagine glycan. The chain crosses the membrane as a helical span at residues alanine 670–isoleucine 690. Over arginine 691–lysine 776 the chain is Cytoplasmic. The tract at residues threonine 757 to lysine 776 is disordered.

Interacts with ITM2B in sperm; the interaction increases following capacitation. Interacts with HSPA5 and CANX.

Its subcellular location is the membrane. Functionally, required for normal male fertility via maintenance of epithelial cell morphology in the caput epididymis and subsequently correct epididymis lumen structure required for sperm development. Plays a role in sperm motility, flagella morphology and tyrosine phosphorylation during sperm capacitance. Plays a role in normal expression levels of HSPA5, ITM2B and ADAM2 in sperm both prior to and post-capacitation. This is a non catalytic metalloprotease-like protein. The polypeptide is Disintegrin and metalloproteinase domain-containing protein 7 (ADAM7) (Macaca fascicularis (Crab-eating macaque)).